The sequence spans 240 residues: Mediator of RNA polymerase II transcription subunit 19-B (240 aa).

A compositionally biased stretch (polar residues) spans 1–14; that stretch reads MTEIFSSLYGQPDS. Disordered regions lie at residues 1–29 and 168–240; these read MTEI…GSGK and PKKK…SSLR. 2 stretches are compositionally biased toward basic residues: residues 168-180 and 209-221; these read PKKK…KHHR and KKKK…KKNR.

The protein belongs to the Mediator complex subunit 19 family. In terms of assembly, component of the Mediator complex.

Its subcellular location is the nucleus. Component of the Mediator complex, a coactivator involved in the regulated transcription of nearly all RNA polymerase II-dependent genes. Mediator functions as a bridge to convey information from gene-specific regulatory proteins to the basal RNA polymerase II transcription machinery. Mediator is recruited to promoters by direct interactions with regulatory proteins and serves as a scaffold for the assembly of a functional preinitiation complex with RNA polymerase II and the general transcription factors. This chain is Mediator of RNA polymerase II transcription subunit 19-B (med19b), found in Danio rerio (Zebrafish).